The following is a 373-amino-acid chain: P2Y purinoceptor 1 (373 aa).

The Extracellular segment spans residues 1–51; the sequence is MTEVLWPAVPNGTDAAFLAGPGSSWGNSTVASTAAVSSSFKCALTKTGFQF. 2 N-linked (GlcNAc...) asparagine glycosylation sites follow: asparagine 11 and asparagine 27. 2 disulfides stabilise this stretch: cysteine 42/cysteine 296 and cysteine 124/cysteine 202. Lysine 46 contacts ADP. A helical membrane pass occupies residues 52-74; sequence YYLPAVYILVFIIGFLGNSVAIW. Over 75-87 the chain is Cytoplasmic; it reads MFVFHMKPWSGIS. Residues 88-109 traverse the membrane as a helical segment; sequence VYMFNLALADFLYVLTLPALIF. Over 110-125 the chain is Extracellular; the sequence is YYFNKTDWIFGDAMCK. The N-linked (GlcNAc...) asparagine glycan is linked to asparagine 113. A helical transmembrane segment spans residues 126–147; it reads LQRFIFHVNLYGSILFLTCISA. Over 148-166 the chain is Cytoplasmic; it reads HRYSGVVYPLKSLGRLKKK. A helical transmembrane segment spans residues 167–188; that stretch reads NAICISVLVWLIVVVAISPILF. Over 189 to 214 the chain is Extracellular; the sequence is YSGTGVRKNKTITCYDTTSDEYLRSY. The N-linked (GlcNAc...) asparagine glycan is linked to asparagine 197. 203–205 serves as a coordination point for ADP; it reads YDT. Residues 215–237 traverse the membrane as a helical segment; that stretch reads FIYSMCTTVAMFCVPLVLILGCY. Residues 238-260 are Cytoplasmic-facing; that stretch reads GLIVRALIYKDLDNSPLRRKSIY. A helical transmembrane segment spans residues 261–284; that stretch reads LVIIVLTVFAVSYIPFHVMKTMNL. ADP contacts are provided by residues 283–287, 303–306, and arginine 310; these read NLRAR and YATY. Over 285 to 303 the chain is Extracellular; sequence RARLDFQTPAMCAFNDRVY. A helical transmembrane segment spans residues 304-325; the sequence is ATYQVTRGLASLNSCVDPILYF. Residues 326 to 373 lie on the Cytoplasmic side of the membrane; sequence LAGDTFRRRLSRATRKASRRSEANLQSKSEDMTLNILPEFKQNGDTSL.

Belongs to the G-protein coupled receptor 1 family.

It is found in the cell membrane. Its activity is regulated as follows. ATP functions as antagonist and inhibits ADP-induced mobilization of Ca(2+). The P2Y1 receptor-specific antagonists A3P5PS, A3P5P and A2P5P inhibit downstream signaling mediated by mobilization of Ca(2+) from intracellular stores, and platelet shape changes in response to extracellular ADP. Its function is as follows. Receptor for extracellular adenine nucleotides such as ADP. In platelets, binding to ADP leads to mobilization of intracellular calcium ions via activation of phospholipase C, a change in platelet shape, and ultimately platelet aggregation. The chain is P2Y purinoceptor 1 (P2RY1) from Homo sapiens (Human).